The sequence spans 510 residues: GMP synthase [glutamine-hydrolyzing] (510 aa).

The Glutamine amidotransferase type-1 domain maps to 5–195; the sequence is LVIVLDFGGQ…LFNIADLSAD (191 aa). Cys-82 serves as the catalytic Nucleophile. Active-site residues include His-169 and Glu-171. The region spanning 196 to 385 is the GMPS ATP-PPase domain; the sequence is WTMGSYIEET…LGLHREIVER (190 aa). An ATP-binding site is contributed by 223–229; sequence SGGIDST.

Homodimer.

It catalyses the reaction XMP + L-glutamine + ATP + H2O = GMP + L-glutamate + AMP + diphosphate + 2 H(+). It functions in the pathway purine metabolism; GMP biosynthesis; GMP from XMP (L-Gln route): step 1/1. In terms of biological role, catalyzes the synthesis of GMP from XMP. This Natranaerobius thermophilus (strain ATCC BAA-1301 / DSM 18059 / JW/NM-WN-LF) protein is GMP synthase [glutamine-hydrolyzing].